Consider the following 155-residue polypeptide: MFLEAAAVMKPFIGTYENKVDRKGRVSVPAKFRAVLQAAEYTTIVVRPDRERGCIEGYGMDRLERLSEATPDLLDEGTQTPSLERIYDILSDSEELPFDPTGRVVVPADLLAQAGIGETAVFVGLGRVFQIWNPTALEASRGRKPRASASQGAGA.

2 SpoVT-AbrB domains span residues 15-62 (TYEN…GMDR) and 93-136 (SEEL…NPTA).

This sequence belongs to the MraZ family. Forms oligomers.

It is found in the cytoplasm. The protein resides in the nucleoid. This chain is Transcriptional regulator MraZ, found in Rhodospirillum rubrum (strain ATCC 11170 / ATH 1.1.1 / DSM 467 / LMG 4362 / NCIMB 8255 / S1).